A 73-amino-acid polypeptide reads, in one-letter code: MANNKSSNNNELLVYGAEQAIDQMKYEIASEFGVNLGADTTARANGSVGGEITKRLVQLAEQQLGGGRSKTTL.

The protein belongs to the alpha/beta-type SASP family.

Functionally, SASP are bound to spore DNA. They are double-stranded DNA-binding proteins that cause DNA to change to an a-like conformation. They protect the DNA backbone from chemical and enzymatic cleavage and are thus involved in dormant spore's high resistance to UV light. This is Small, acid-soluble spore protein C2 (SASP-C2) from Priestia megaterium (Bacillus megaterium).